Reading from the N-terminus, the 429-residue chain is Glutamate-1-semialdehyde 2,1-aminomutase 1 (429 aa).

Position 268 is an N6-(pyridoxal phosphate)lysine (Lys-268).

This sequence belongs to the class-III pyridoxal-phosphate-dependent aminotransferase family. HemL subfamily. In terms of assembly, homodimer. Pyridoxal 5'-phosphate serves as cofactor.

Its subcellular location is the cytoplasm. The enzyme catalyses (S)-4-amino-5-oxopentanoate = 5-aminolevulinate. It functions in the pathway porphyrin-containing compound metabolism; protoporphyrin-IX biosynthesis; 5-aminolevulinate from L-glutamyl-tRNA(Glu): step 2/2. This chain is Glutamate-1-semialdehyde 2,1-aminomutase 1, found in Listeria innocua serovar 6a (strain ATCC BAA-680 / CLIP 11262).